The following is a 1169-amino-acid chain: Polyamine-transporting ATPase 13A2 (1169 aa).

Topologically, residues 1–44 are cytoplasmic; that stretch reads MSADSSLLMGSTPPSYGTLTTGTSIDPLSSSASSVRLSGYCGSP. The stretch at 45 to 65 is an intramembrane region; the sequence is WRAIGYHAAVWMLAGIPWLLF. Residues 66–225 lie on the Cytoplasmic side of the membrane; that stretch reads RWKPLWGVRL…ISIPVKSYLQ (160 aa). The helical transmembrane segment at 226–246 threads the bilayer; that stretch reads LLADEALNPYYGFQAFSIALW. The Lumenal segment spans residues 247–250; it reads LADH. The helical transmembrane segment at 251-271 threads the bilayer; the sequence is YYWYALCIFLISAISICLALY. Over 272-422 the chain is Cytoplasmic; that stretch reads KTRKQSLTLR…SFKFYKHSMK (151 aa). A helical membrane pass occupies residues 423–443; sequence FVAALSVLALLGTVYSIIILY. The Lumenal segment spans residues 444-458; sequence RNRVPVREIVIRALD. The chain crosses the membrane as a helical span at residues 459 to 479; the sequence is LVTVVVPPALPAAMTVCTLYA. The Cytoplasmic portion of the chain corresponds to 480 to 919; it reads QSRLRTQGIF…REGRCSLDTS (440 aa). The active-site 4-aspartylphosphate intermediate is the Asp508. Mg(2+)-binding residues include Asp867 and Asp871. A helical membrane pass occupies residues 920–940; sequence FSVFKYMALYSLTQFISVLIL. Residues 941 to 946 lie on the Lumenal side of the membrane; it reads YTINTN. A helical membrane pass occupies residues 947 to 967; it reads LGDLQFLAIDLVITTTVAVLM. Residues 968–993 are Cytoplasmic-facing; it reads SRTGPALTLVRARPPGALLSVPVLGS. Residues 994 to 1014 form a helical membrane-spanning segment; the sequence is LLLQVALVAGIQLGGYFLVIA. The Lumenal segment spans residues 1015–1037; the sequence is QPWFVPLNRTVPAPDNLPNYENT. The N-linked (GlcNAc...) asparagine glycan is linked to Asn1022. A helical transmembrane segment spans residues 1038 to 1058; it reads VVFSLSGFQYLILAAAVSKGA. The Cytoplasmic portion of the chain corresponds to 1059-1069; sequence PFRQPLYTNVP. A helical membrane pass occupies residues 1070-1090; that stretch reads FLVALALLGSVLVGLILVPGL. The Lumenal segment spans residues 1091 to 1106; it reads LQGPLGLRNIVDSSFK. A helical membrane pass occupies residues 1107–1127; that stretch reads LLLLGLVAFNFVGAFMLESVL. The Cytoplasmic portion of the chain corresponds to 1128–1169; that stretch reads DQCLPACLRWLRPKRASKKQFKRLQQELAEHPWPTLPVGSVR.

Belongs to the cation transport ATPase (P-type) (TC 3.A.3) family. Type V subfamily. As to quaternary structure, interacts with MYCBP2; the interaction inhibits the ubiquitination of TSC2 by MYCBP2. Interacts with HDAC6; the interaction results in recruitment of HDAC6 to lysosomes to promote CTTN deacetylation. Post-translationally, autophosphorylated. Accumulates in an inactive autophosphorylated state and autophosphorylation is stimulated by phosphatidic acid and phosphatidylinositol 3,5-bisphosphate but not by Mn(2+) or Zn(2+). The presence of spermine results in a dose-dependent reduction in autophosphorylation.

The protein localises to the lysosome membrane. It localises to the late endosome membrane. Its subcellular location is the endosome. It is found in the multivesicular body membrane. The protein resides in the cytoplasmic vesicle. The protein localises to the autophagosome membrane. It catalyses the reaction spermidine(out) + ATP + H2O = spermidine(in) + ADP + phosphate + H(+). The enzyme catalyses spermine(out) + ATP + H2O = spermine(in) + ADP + phosphate + H(+). Its activity is regulated as follows. Accumulates in an inactive autophosphorylated state. The presence of spermine results in a dose-dependent reduction in autophosphorylation. ATPase which acts as a lysosomal polyamine exporter with high affinity for spermine. Also stimulates cellular uptake of polyamines and protects against polyamine toxicity. Plays a role in intracellular cation homeostasis and the maintenance of neuronal integrity. Contributes to cellular zinc homeostasis. Confers cellular protection against Mn(2+) and Zn(2+) toxicity and mitochondrial stress. Required for proper lysosomal and mitochondrial maintenance. Regulates the autophagy-lysosome pathway through the control of SYT11 expression at both transcriptional and post-translational levels. Facilitates recruitment of deacetylase HDAC6 to lysosomes to deacetylate CTTN, leading to actin polymerization, promotion of autophagosome-lysosome fusion and completion of autophagy. Promotes secretion of exosomes as well as secretion of SCNA via exosomes. Plays a role in lipid homeostasis. This chain is Polyamine-transporting ATPase 13A2, found in Mus musculus (Mouse).